The chain runs to 236 residues: MGVEGCTKCIKYLLFVFNFVFWLAGGVILGVALWLRHDPQTTTLLYLELGDKPAPSTFYVGIYILIAVGAVMMFVGFLGCYGAIQESQCLLGTFFTCLVILFACEVAAGIWGFVNKDQIAKDVKQFYDQALQQAVMDDDANNAKAVVKTFHETLNCCGSNTLTTLTTAVLRNSLCPSSSNSFTQLLKEDCHQKIDELFSGKLYLIGIAAIVVAVIMIFEMILSMVLCCGIRNSSVY.

Over methionine 1 to tyrosine 12 the chain is Cytoplasmic. Residues leucine 13–leucine 33 traverse the membrane as a helical segment. Over tryptophan 34–tyrosine 63 the chain is Extracellular. The helical transmembrane segment at isoleucine 64–isoleucine 84 threads the bilayer. Residues glutamine 85–cysteine 89 are Cytoplasmic-facing. Residues leucine 90–glycine 112 traverse the membrane as a helical segment. Topologically, residues phenylalanine 113–lysine 201 are extracellular. Disulfide bonds link cysteine 156-cysteine 190 and cysteine 157-cysteine 175. The helical transmembrane segment at leucine 202 to methionine 224 threads the bilayer. Glutamate 219 contacts cholesterol. Topologically, residues valine 225–tyrosine 236 are cytoplasmic.

Belongs to the tetraspanin (TM4SF) family. As to quaternary structure, homodimer. Part of a complex composed of CD19, CR2/CD21, CD81 and IFITM1/CD225 in the membrane of mature B cells. Interacts (via the second extracellular domain) with CD19; this interaction is initiated early during biosynthesis in the ER and enables trafficking of only properly folded CD19. Part of a complex that includes MHC class II/HLA-DR molecules and IFITM1. Interacts with IFITM1. Interacts with IFITM2 and IFITM3. Part of integrin-tetraspanin complex composed of CD9, CD81, beta-1 and beta-2 integrins in the membrane of monocyte/macrophages. Interacts (via the second extracellular domain) with integrin ITGAV:ITGB3. Interacts with CD247/CD3 zeta, ICAM1 and CD9 at the immune synapse on T cell membrane. Part of a GPCR-tetraspanin complex consisting at least of ADGRG1, CD81, possibly CD9, and GNA11 in which CD81 enhances the association of ADGRG1 with GNA11. Part of a complex composed of CD9, CD81, PTGFRN and IGSF8. Interacts directly with IGSF8. Interacts with CD53 and SCIMP. Interacts with SAMHD1 (via its C-terminus). Interacts with glypican GPC3 and with the transcriptional repressor HHEX; binding to GPC3 decreases the availability of free CD81 for binding to HHEX, resulting in nuclear translocation of HHEX and transcriptional repression. Interacts with CLDN1. Interacts with CLDN6 and CLDN9. Post-translationally, not glycosylated. Likely constitutively palmitoylated at low levels. Protein palmitoylation is up-regulated upon coligation of BCR and CD9-C2R-CD81 complexes in lipid rafts.

The protein resides in the cell membrane. It is found in the basolateral cell membrane. Its function is as follows. Structural component of specialized membrane microdomains known as tetraspanin-enriched microdomains (TERMs), which act as platforms for receptor clustering and signaling. Essential for trafficking and compartmentalization of CD19 receptor on the surface of activated B cells. Upon initial encounter with microbial pathogens, enables the assembly of CD19-CR2/CD21 and B cell receptor (BCR) complexes at signaling TERMs, lowering the threshold dose of antigen required to trigger B cell clonal expansion and antibody production. In T cells, facilitates the localization of CD247/CD3 zeta at antigen-induced synapses with B cells, providing for costimulation and polarization toward T helper type 2 phenotype. Present in MHC class II compartments, may also play a role in antigen presentation. Can act both as positive and negative regulator of homotypic or heterotypic cell-cell fusion processes. Positively regulates sperm-egg fusion and may be involved in acrosome reaction. In myoblasts, associates with CD9 and PTGFRN and inhibits myotube fusion during muscle regeneration. In macrophages, associates with CD9 and beta-1 and beta-2 integrins, and prevents macrophage fusion into multinucleated giant cells specialized in ingesting complement-opsonized large particles. Also prevents the fusion of mononuclear cell progenitors into osteoclasts in charge of bone resorption. May regulate the compartmentalization of enzymatic activities. In T cells, defines the subcellular localization of dNTPase SAMHD1 and permits its degradation by the proteasome, thereby controlling intracellular dNTP levels. Also involved in cell adhesion and motility. Positively regulates integrin-mediated adhesion of macrophages, particularly relevant for the inflammatory response in the lung. In Rattus norvegicus (Rat), this protein is CD81 antigen (Cd81).